The primary structure comprises 370 residues: F-box protein At3g20690 (370 aa).

Residues 1–45 (MMMSDLPHDLVEEILSRLPLISLKAMRSTCKTWNVLSKHRSFANK) form the F-box domain.

This Arabidopsis thaliana (Mouse-ear cress) protein is F-box protein At3g20690.